The following is a 249-amino-acid chain: MAGHSHWAKVKHQKGLTDIRKGKLFSKLSREISIAARLGGGDPTFNSRLRRAIANAKDEGVPLENITRAIQKGTGEIAGSHYEDVLYEGYGPGGVAVLIEAATDNRNRTTAEIRNLFSKYGGNLGAAGSVSWIFQKKGRIVLDGDQNDFDRVFEVALEAGAEDVEQKGSEIEVICLPEKLDELQKHLDTAGLTIKSSQITYLPKNSISVTDKETFKSLYRLLDILEDHDDVQNVYANFDAPQELLEQCE.

This sequence belongs to the TACO1 family.

Its subcellular location is the cytoplasm. The polypeptide is Probable transcriptional regulatory protein Minf_0651 (Methylacidiphilum infernorum (isolate V4) (Methylokorus infernorum (strain V4))).